A 248-amino-acid polypeptide reads, in one-letter code: Coenzyme F420:L-glutamate ligase (248 aa).

GTP is bound by residues 15-18 (IPLI), 45-46 (ET), and Lys-50. Residue Asp-115 coordinates a divalent metal cation. Asn-118 lines the GTP pocket. Residues Asp-155, Ser-156, and Gln-213 each contribute to the a divalent metal cation site. 211-218 (MGQSNEGI) lines the GTP pocket.

This sequence belongs to the CofE family. In terms of assembly, homodimer. Mg(2+) is required as a cofactor. Mn(2+) serves as cofactor. Requires K(+) as cofactor.

It catalyses the reaction oxidized coenzyme F420-0 + GTP + L-glutamate = oxidized coenzyme F420-1 + GDP + phosphate + H(+). The catalysed reaction is oxidized coenzyme F420-1 + GTP + L-glutamate = oxidized coenzyme F420-2 + GDP + phosphate + H(+). It participates in cofactor biosynthesis; coenzyme F420 biosynthesis. Catalyzes the GTP-dependent successive addition of two or more gamma-linked L-glutamates to the L-lactyl phosphodiester of 7,8-didemethyl-8-hydroxy-5-deazariboflavin (F420-0) to form coenzyme F420-0-glutamyl-glutamate (F420-2) or polyglutamated F420 derivatives. This is Coenzyme F420:L-glutamate ligase from Methanococcus maripaludis (strain C7 / ATCC BAA-1331).